Reading from the N-terminus, the 374-residue chain is Ribosomal RNA large subunit methyltransferase G (374 aa).

This sequence belongs to the methyltransferase superfamily. RlmG family.

Its subcellular location is the cytoplasm. It catalyses the reaction guanosine(1835) in 23S rRNA + S-adenosyl-L-methionine = N(2)-methylguanosine(1835) in 23S rRNA + S-adenosyl-L-homocysteine + H(+). Its function is as follows. Specifically methylates the guanine in position 1835 (m2G1835) of 23S rRNA. The polypeptide is Ribosomal RNA large subunit methyltransferase G (Pseudomonas entomophila (strain L48)).